A 359-amino-acid chain; its full sequence is MDSNNHLYDPNPTGSGLLRFRSAPSSVLAAFVDDDKIGFDSDRLLSRFVTSNGVNGDLGSPKFEDKSPVSLTNTSVSYAATLPPPPQLEPSSFLGLPPHYPRQSKGIMNSVGLDQFLGINNHHTKPVESNLLRQSSSPAGMFTNLSDQNGYGSMRNLMNYEEDEESPSNSNGLRRHCSLSSRPPSSLGMLSQIPEIAPETNFPYSHWNDPSSFIDNLSSLKREAEDDGKLFLGAQNGESGNRMQLLSHHLSLPKSSSTASDMVSVDKYLQLQDSVPCKIRAKRGCATHPRSIAERVRRTRISERMRKLQELVPNMDKQTNTSDMLDLAVDYIKDLQRQYKILNDNRANCKCMNKEKKSI.

S60 carries the phosphoserine modification. The interval 161–186 (EEDEESPSNSNGLRRHCSLSSRPPSS) is disordered. Residues 167 to 184 (PSNSNGLRRHCSLSSRPP) show a composition bias toward polar residues. Positions 285–335 (CATHPRSIAERVRRTRISERMRKLQELVPNMDKQTNTSDMLDLAVDYIKDL) constitute a bHLH domain.

Homodimer.

Its subcellular location is the nucleus. This Arabidopsis thaliana (Mouse-ear cress) protein is Transcription factor bHLH130 (BHLH130).